A 403-amino-acid polypeptide reads, in one-letter code: Basic leucine zipper 25 (403 aa).

Disordered regions lie at residues 13-128 (SFWP…APVV) and 156-259 (VKPE…EFDT). Residues 24–33 (PGSSSTPSPT) are compositionally biased toward low complexity. The segment covering 56-69 (LSGSDSSPTTNTIE) has biased composition (polar residues). Composition is skewed to low complexity over residues 115 to 128 (APSS…APVV) and 161 to 174 (SSAS…AQGS). Residues 175–195 (IVAQTSPGASSVRFSPTTSTQ) show a composition bias toward polar residues. Positions 212–226 (DSDDDDLDGDADNGD) are enriched in acidic residues. Serine 213 carries the post-translational modification Phosphoserine. The 64-residue stretch at 229–292 (DVKRARRMLS…DAAAVDNRIL (64 aa)) folds into the bZIP domain. The basic motif stretch occupies residues 231-250 (KRARRMLSNRESARRSRRRK). Positions 233 to 240 (ARRMLSNR) match the Nuclear localization signal motif. The leucine-zipper stretch occupies residues 264–271 (LRAEHSTL). Residues 332–345 (NTPSASSSIPPNSN) show a composition bias toward low complexity. 2 disordered regions span residues 332–361 (NTPS…SAGL) and 380–403 (EGMQ…NHKH). The span at 351-361 (ANSSTNTSAGL) shows a compositional bias: polar residues.

The protein belongs to the bZIP family. Homodimer. Forms a heterodimer with BZIP1, BZIP1, BZIP2, BZIP9, BZIP11, BZIP44, BZIP53 and BZIP63. Interacts with ABI3 and forms a complex made of ABI3, BZIP53 and BZIP25. In terms of tissue distribution, expressed in roots, shoots, stems, leaves, stipulae, siliques, seeds, pollen, and flowers.

The protein resides in the nucleus. In terms of biological role, transcription factor that binds to the 5'-ACGT-3' box, especially present in G-box-like motif (5'-CCACGTGGCC-3'), ABRE elements, of seed storage protein (SSP) encoding gene promoters (e.g. At2S and CRU3) and promotes their expression in seeds when in complex with ABI3 and BZIP53. The chain is Basic leucine zipper 25 (BZIP25) from Arabidopsis thaliana (Mouse-ear cress).